Consider the following 132-residue polypeptide: Small ribosomal subunit protein uS8 (132 aa).

The protein belongs to the universal ribosomal protein uS8 family. As to quaternary structure, part of the 30S ribosomal subunit. Contacts proteins S5 and S12.

Functionally, one of the primary rRNA binding proteins, it binds directly to 16S rRNA central domain where it helps coordinate assembly of the platform of the 30S subunit. This Alkaliphilus oremlandii (strain OhILAs) (Clostridium oremlandii (strain OhILAs)) protein is Small ribosomal subunit protein uS8.